A 196-amino-acid polypeptide reads, in one-letter code: ATP-dependent Clp protease proteolytic subunit (196 aa).

Ser-101 (nucleophile) is an active-site residue. His-126 is an active-site residue.

It belongs to the peptidase S14 family. Component of the chloroplastic Clp protease core complex.

The protein resides in the plastid. It localises to the chloroplast stroma. The enzyme catalyses Hydrolysis of proteins to small peptides in the presence of ATP and magnesium. alpha-casein is the usual test substrate. In the absence of ATP, only oligopeptides shorter than five residues are hydrolyzed (such as succinyl-Leu-Tyr-|-NHMec, and Leu-Tyr-Leu-|-Tyr-Trp, in which cleavage of the -Tyr-|-Leu- and -Tyr-|-Trp bonds also occurs).. Functionally, cleaves peptides in various proteins in a process that requires ATP hydrolysis. Has a chymotrypsin-like activity. Plays a major role in the degradation of misfolded proteins. This is ATP-dependent Clp protease proteolytic subunit from Lactuca sativa (Garden lettuce).